Consider the following 356-residue polypeptide: Carbamoyl phosphate synthase small chain (356 aa).

Residues 1 to 160 (MKGYLKLEDG…TKKPYRIAGI (160 aa)) form a CPSase region. L-glutamine contacts are provided by Ser-45, Gly-211, and Gly-213. The Glutamine amidotransferase type-1 domain occupies 163 to 350 (KLAFIDLGTK…MDIVMVYKRR (188 aa)). Cys-238 (nucleophile) is an active-site residue. L-glutamine contacts are provided by Leu-239, Gln-242, Asn-280, Gly-282, and Tyr-283. Catalysis depends on residues His-323 and Glu-325.

This sequence belongs to the CarA family. In terms of assembly, composed of two chains; the small (or glutamine) chain promotes the hydrolysis of glutamine to ammonia, which is used by the large (or ammonia) chain to synthesize carbamoyl phosphate. Tetramer of heterodimers (alpha,beta)4.

The catalysed reaction is hydrogencarbonate + L-glutamine + 2 ATP + H2O = carbamoyl phosphate + L-glutamate + 2 ADP + phosphate + 2 H(+). It carries out the reaction L-glutamine + H2O = L-glutamate + NH4(+). The protein operates within amino-acid biosynthesis; L-arginine biosynthesis; carbamoyl phosphate from bicarbonate: step 1/1. It functions in the pathway pyrimidine metabolism; UMP biosynthesis via de novo pathway; (S)-dihydroorotate from bicarbonate: step 1/3. Small subunit of the glutamine-dependent carbamoyl phosphate synthetase (CPSase). CPSase catalyzes the formation of carbamoyl phosphate from the ammonia moiety of glutamine, carbonate, and phosphate donated by ATP, constituting the first step of 2 biosynthetic pathways, one leading to arginine and/or urea and the other to pyrimidine nucleotides. The small subunit (glutamine amidotransferase) binds and cleaves glutamine to supply the large subunit with the substrate ammonia. The sequence is that of Carbamoyl phosphate synthase small chain from Caldanaerobacter subterraneus subsp. tengcongensis (strain DSM 15242 / JCM 11007 / NBRC 100824 / MB4) (Thermoanaerobacter tengcongensis).